Reading from the N-terminus, the 321-residue chain is Gap junction delta-2 protein (321 aa).

Residues 1–19 (MGEWTILERLLEAAVQQHS) are Cytoplasmic-facing. The chain crosses the membrane as a helical span at residues 20 to 42 (TMIGRILLTVVVIFRILIVAIVG). Over 43–75 (ETVYDDEQTMFVCNTLQPGCNQACYDRAFPISH) the chain is Extracellular. A helical transmembrane segment spans residues 76–98 (IRYWVFQIIMVCTPSLCFITYSV). Topologically, residues 99 to 197 (HQSAKQRERR…KLRRQEGISR (99 aa)) are cytoplasmic. A disordered region spans residues 120 to 141 (PAESIGGPGGTGGGGSGGSKRE). A compositionally biased stretch (gly residues) spans 125–137 (GGPGGTGGGGSGG). The helical transmembrane segment at 198 to 220 (FYIIQVVFRNALEIGFLVGQYFL) threads the bilayer. Residues 221-252 (YGFSVPGLYECNRYPCIKEVECYVSRPTEKTV) lie on the Extracellular side of the membrane. A helical membrane pass occupies residues 253–275 (FLVFMFAVSGICVVLNLAELNHL). The Cytoplasmic portion of the chain corresponds to 276–321 (GWRKIKLAVRGAQAKRKSVYEIRNKDLPRVSVPNFGRTQSSDSAYV).

It belongs to the connexin family. Delta-type subfamily. As to quaternary structure, a connexon is composed of a hexamer of connexins. In terms of tissue distribution, highly expressed in neurons.

The protein resides in the cell membrane. It localises to the cell junction. It is found in the gap junction. One gap junction consists of a cluster of closely packed pairs of transmembrane channels, the connexons, through which materials of low MW diffuse from one cell to a neighboring cell. The chain is Gap junction delta-2 protein (Gjd2) from Rattus norvegicus (Rat).